We begin with the raw amino-acid sequence, 359 residues long: Phospho-N-acetylmuramoyl-pentapeptide-transferase (359 aa).

The next 10 membrane-spanning stretches (helical) occupy residues 3–23, 55–75, 80–100, 117–137, 156–176, 187–207, 231–251, 255–275, 280–300, and 334–354; these read QIMI…PALI, VAIL…GLAF, ITAS…VGFL, TAKT…VLQF, IATV…VVSA, LDGL…LITF, LALI…WNAA, IFMG…LSVT, ILAV…VLQI, and FWLL…GEWL.

The protein belongs to the glycosyltransferase 4 family. MraY subfamily. Mg(2+) is required as a cofactor.

Its subcellular location is the cell inner membrane. The catalysed reaction is UDP-N-acetyl-alpha-D-muramoyl-L-alanyl-gamma-D-glutamyl-meso-2,6-diaminopimeloyl-D-alanyl-D-alanine + di-trans,octa-cis-undecaprenyl phosphate = di-trans,octa-cis-undecaprenyl diphospho-N-acetyl-alpha-D-muramoyl-L-alanyl-D-glutamyl-meso-2,6-diaminopimeloyl-D-alanyl-D-alanine + UMP. It functions in the pathway cell wall biogenesis; peptidoglycan biosynthesis. Its function is as follows. Catalyzes the initial step of the lipid cycle reactions in the biosynthesis of the cell wall peptidoglycan: transfers peptidoglycan precursor phospho-MurNAc-pentapeptide from UDP-MurNAc-pentapeptide onto the lipid carrier undecaprenyl phosphate, yielding undecaprenyl-pyrophosphoryl-MurNAc-pentapeptide, known as lipid I. This chain is Phospho-N-acetylmuramoyl-pentapeptide-transferase, found in Mycobacterium marinum (strain ATCC BAA-535 / M).